The sequence spans 222 residues: Apoptosis regulator OPG045 (222 aa).

It belongs to the orthopoxvirus OPG045 family. In terms of assembly, homodimer. Interacts with host pro-apoptotic protein BCL2L11 (via BH3 domain). Interacts with host NLRP1. Interacts with host BAK.

The protein resides in the host mitochondrion outer membrane. The protein localises to the host cytoplasm. Plays a role in evading host innate immune response by inhibiting host inflammasome activation. Interacts with and inhibits NLR-mediated interleukin-1 beta/IL1B production in infected cells. At the host mitochondria outer membrane, interacts with the BH3 domain of host BAK and prevents BAK from binding active BAX. In turn, host apoptosis is inhibited. In Homo sapiens (Human), this protein is Apoptosis regulator OPG045 (OPG045).